A 231-amino-acid polypeptide reads, in one-letter code: Translin-associated protein X homolog (231 aa).

It belongs to the translin family.

It is found in the cytoplasm. The protein resides in the nucleus. The polypeptide is Translin-associated protein X homolog (Schizosaccharomyces pombe (strain 972 / ATCC 24843) (Fission yeast)).